The primary structure comprises 227 residues: uncharacterized protein (227 aa).

Positions 1–25 are cleaved as a signal peptide; that stretch reads MLIMKKLLLIAATSATMLSSSVSFA.

To R.conorii RC1281.

This is an uncharacterized protein from Rickettsia conorii (strain ATCC VR-613 / Malish 7).